A 366-amino-acid polypeptide reads, in one-letter code: Left-right determination factor 1 (366 aa).

The signal sequence occupies residues 1-21; the sequence is MQPLWLCWALWVLPLASPGAA. A propeptide spans 22 to 76 (or 135); that stretch reads LTGEQLLGSLLRQLQLKEVPTLDRADMEELVIPTHVRAQYVALLQRSHGDRSRGK. N-linked (GlcNAc...) asparagine glycosylation occurs at Asn158. 4 disulfides stabilise this stretch: Cys251–Cys264, Cys263–Cys316, Cys293–Cys351, and Cys297–Cys353.

This sequence belongs to the TGF-beta family. In terms of processing, the processing of the protein may also occur at the second R-X-X-R site located at AA 132-135. Processing appears to be regulated in a cell-type specific manner.

The protein resides in the secreted. Its function is as follows. Required for left-right axis determination as a regulator of LEFTY2 and NODAL. The polypeptide is Left-right determination factor 1 (LEFTY1) (Homo sapiens (Human)).